Here is an 87-residue protein sequence, read N- to C-terminus: Large ribosomal subunit protein eL20 (87 aa).

It belongs to the eukaryotic ribosomal protein eL20 family. In terms of assembly, part of the 50S ribosomal subunit. Binds 23S rRNA.

The chain is Large ribosomal subunit protein eL20 from Hyperthermus butylicus (strain DSM 5456 / JCM 9403 / PLM1-5).